We begin with the raw amino-acid sequence, 254 residues long: Ubiquinone/menaquinone biosynthesis C-methyltransferase UbiE (254 aa).

S-adenosyl-L-methionine is bound by residues T77, D98, 126–127 (NA), and S143.

This sequence belongs to the class I-like SAM-binding methyltransferase superfamily. MenG/UbiE family.

It catalyses the reaction a 2-demethylmenaquinol + S-adenosyl-L-methionine = a menaquinol + S-adenosyl-L-homocysteine + H(+). It carries out the reaction a 2-methoxy-6-(all-trans-polyprenyl)benzene-1,4-diol + S-adenosyl-L-methionine = a 5-methoxy-2-methyl-3-(all-trans-polyprenyl)benzene-1,4-diol + S-adenosyl-L-homocysteine + H(+). It participates in quinol/quinone metabolism; menaquinone biosynthesis; menaquinol from 1,4-dihydroxy-2-naphthoate: step 2/2. Its pathway is cofactor biosynthesis; ubiquinone biosynthesis. In terms of biological role, methyltransferase required for the conversion of demethylmenaquinol (DMKH2) to menaquinol (MKH2) and the conversion of 2-polyprenyl-6-methoxy-1,4-benzoquinol (DDMQH2) to 2-polyprenyl-3-methyl-6-methoxy-1,4-benzoquinol (DMQH2). The chain is Ubiquinone/menaquinone biosynthesis C-methyltransferase UbiE from Hydrogenovibrio crunogenus (strain DSM 25203 / XCL-2) (Thiomicrospira crunogena).